The following is a 101-amino-acid chain: Small ribosomal subunit protein uS14 (101 aa).

The protein belongs to the universal ribosomal protein uS14 family. In terms of assembly, part of the 30S ribosomal subunit. Contacts proteins S3 and S10.

In terms of biological role, binds 16S rRNA, required for the assembly of 30S particles and may also be responsible for determining the conformation of the 16S rRNA at the A site. The sequence is that of Small ribosomal subunit protein uS14 from Corynebacterium efficiens (strain DSM 44549 / YS-314 / AJ 12310 / JCM 11189 / NBRC 100395).